The primary structure comprises 291 residues: ATP synthase gamma chain (291 aa).

This sequence belongs to the ATPase gamma chain family. F-type ATPases have 2 components, CF(1) - the catalytic core - and CF(0) - the membrane proton channel. CF(1) has five subunits: alpha(3), beta(3), gamma(1), delta(1), epsilon(1). CF(0) has three main subunits: a, b and c.

It localises to the cell inner membrane. Produces ATP from ADP in the presence of a proton gradient across the membrane. The gamma chain is believed to be important in regulating ATPase activity and the flow of protons through the CF(0) complex. The chain is ATP synthase gamma chain from Burkholderia mallei (strain NCTC 10247).